Here is a 221-residue protein sequence, read N- to C-terminus: Immediate early response gene 2 protein (221 aa).

Position 1 is an N-acetylmethionine (M1). Positions 54 to 156 (THQPEFPPSR…EGEATSEVSN (103 aa)) are disordered. The span at 64–77 (RALDPRLHPPREPE) shows a compositional bias: basic and acidic residues. Residues 125–136 (SDLSDGSDAGLV) show a composition bias toward low complexity.

This sequence belongs to the IER family.

The protein resides in the cytoplasm. The protein localises to the nucleus. Its function is as follows. DNA-binding protein that seems to act as a transcription factor. Involved in the regulation of neuronal differentiation, acts upon JNK-signaling pathway activation and plays a role in neurite outgrowth in hippocampal cells. May mediate with FIBP FGF-signaling in the establishment of laterality in the embryo. Promotes cell motility, seems to stimulate tumor metastasis. The polypeptide is Immediate early response gene 2 protein (Ier2) (Rattus norvegicus (Rat)).